The following is a 343-amino-acid chain: Mitochondrial distribution and morphology protein 34 (343 aa).

Residues 1–196 (MSFVFPSWST…LPGIIHRLSQ (196 aa)) enclose the SMP-LTD domain. 2 disordered regions span residues 227–255 (EVEE…IGPG) and 300–325 (GAGT…KAKR). Low complexity predominate over residues 306 to 317 (SGRASLASSSVG).

This sequence belongs to the MDM34 family. As to quaternary structure, component of the ER-mitochondria encounter structure (ERMES) or MDM complex, composed of MMM1, MDM10, MDM12 and MDM34.

The protein resides in the mitochondrion outer membrane. In terms of biological role, component of the ERMES/MDM complex, which serves as a molecular tether to connect the endoplasmic reticulum (ER) and mitochondria. Components of this complex are involved in the control of mitochondrial shape and protein biogenesis, and function in nonvesicular lipid trafficking between the ER and mitochondria. MDM34 is required for the interaction of the ER-resident membrane protein MMM1 and the outer mitochondrial membrane-resident beta-barrel protein MDM10. The sequence is that of Mitochondrial distribution and morphology protein 34 from Cryptococcus neoformans var. neoformans serotype D (strain B-3501A) (Filobasidiella neoformans).